Here is a 637-residue protein sequence, read N- to C-terminus: 1-deoxy-D-xylulose-5-phosphate synthase (637 aa).

Residues H71 and 112–114 each bind thiamine diphosphate; that span reads SHA. D144 is a binding site for Mg(2+). Thiamine diphosphate-binding positions include 145 to 146, N173, Y284, and E365; that span reads GA. Mg(2+) is bound at residue N173.

This sequence belongs to the transketolase family. DXPS subfamily. In terms of assembly, homodimer. Mg(2+) serves as cofactor. It depends on thiamine diphosphate as a cofactor.

The catalysed reaction is D-glyceraldehyde 3-phosphate + pyruvate + H(+) = 1-deoxy-D-xylulose 5-phosphate + CO2. It functions in the pathway metabolic intermediate biosynthesis; 1-deoxy-D-xylulose 5-phosphate biosynthesis; 1-deoxy-D-xylulose 5-phosphate from D-glyceraldehyde 3-phosphate and pyruvate: step 1/1. Its function is as follows. Catalyzes the acyloin condensation reaction between C atoms 2 and 3 of pyruvate and glyceraldehyde 3-phosphate to yield 1-deoxy-D-xylulose-5-phosphate (DXP). This Mycolicibacterium vanbaalenii (strain DSM 7251 / JCM 13017 / BCRC 16820 / KCTC 9966 / NRRL B-24157 / PYR-1) (Mycobacterium vanbaalenii) protein is 1-deoxy-D-xylulose-5-phosphate synthase.